A 110-amino-acid polypeptide reads, in one-letter code: Protein C-ets-2 (110 aa).

Positions 1 to 84 (SGPIQLWQFL…AGKRYVYRFV (84 aa)) form a DNA-binding region, ETS.

Belongs to the ETS family.

It is found in the nucleus. Functionally, probable transcription factor. The protein is Protein C-ets-2 (ETS-2) of Lytechinus variegatus (Green sea urchin).